The following is a 208-amino-acid chain: Thymidylate kinase (208 aa).

Position 10 to 17 (10 to 17 (GPEGSGKT)) interacts with ATP.

This sequence belongs to the thymidylate kinase family.

It catalyses the reaction dTMP + ATP = dTDP + ADP. Its function is as follows. Phosphorylation of dTMP to form dTDP in both de novo and salvage pathways of dTTP synthesis. The sequence is that of Thymidylate kinase from Bacillus mycoides (strain KBAB4) (Bacillus weihenstephanensis).